Consider the following 865-residue polypeptide: Probable beta-glucosidase J (865 aa).

Residue D233 is part of the active site. N330, N447, N503, and N764 each carry an N-linked (GlcNAc...) asparagine glycan. Residues 411–579 form the PA14 domain; it reads TGQPGYTFRV…DTDTAIQQAV (169 aa).

It belongs to the glycosyl hydrolase 3 family.

It is found in the secreted. The enzyme catalyses Hydrolysis of terminal, non-reducing beta-D-glucosyl residues with release of beta-D-glucose.. Its pathway is glycan metabolism; cellulose degradation. Functionally, beta-glucosidases are one of a number of cellulolytic enzymes involved in the degradation of cellulosic biomass. Catalyzes the last step releasing glucose from the inhibitory cellobiose. The sequence is that of Probable beta-glucosidase J (bglJ) from Aspergillus fumigatus (strain CBS 144.89 / FGSC A1163 / CEA10) (Neosartorya fumigata).